Consider the following 401-residue polypeptide: Tumor necrosis factor receptor superfamily member 11B (401 aa).

Positions 1–21 (MNKWLCCALLVFLDIIEWTTQ) are cleaved as a signal peptide. TNFR-Cys repeat units follow at residues 24–62 (FPPK…KTLC), 65–105 (CPDY…NRVC), 107–142 (CEEG…NTVC), and 145–185 (CPDG…DNVC). 8 disulfide bridges follow: Cys-41/Cys-54, Cys-44/Cys-62, Cys-65/Cys-80, Cys-83/Cys-97, Cys-87/Cys-105, Cys-107/Cys-118, Cys-124/Cys-142, and Cys-145/Cys-160. Asn-98 carries N-linked (GlcNAc...) asparagine glycosylation. Residues Asn-165 and Asn-178 are each glycosylated (N-linked (GlcNAc...) asparagine). A disulfide bridge links Cys-166 with Cys-185. 2 consecutive Death domains span residues 198 to 269 (DVTL…MVKK) and 270 to 365 (IIQD…THSL). Asn-289 is a glycosylation site (N-linked (GlcNAc...) asparagine).

Homodimer. Interacts with TNFSF10 and TNFSF11.

It is found in the secreted. In terms of biological role, acts as a decoy receptor for TNFSF11/RANKL and thereby neutralizes its function in osteoclastogenesis. Inhibits the activation of osteoclasts and promotes osteoclast apoptosis in vitro. Bone homeostasis seems to depend on the local ratio between TNFSF11 and TNFRSF11B. May also play a role in preventing arterial calcification. May act as decoy receptor for TNFSF10/TRAIL and protect against apoptosis. TNFSF10/TRAIL binding blocks the inhibition of osteoclastogenesis. The sequence is that of Tumor necrosis factor receptor superfamily member 11B (Tnfrsf11b) from Rattus norvegicus (Rat).